The primary structure comprises 382 residues: MTVEKSVVFKAEGEHFTDQKGNTIVGSGSGGTTKYFRIPAMCTTSKGTIVVFADARHNTASDQSFIDTAAARSTDGGKTWNKKIAIYNDRVNSKLSRVMDPTCIVANIQGRETILVMVGKWNNNDKTWGAYRDKAPDTDWDLVLYKSTDDGVTFSKVETNIHDIVTKNGTISAMLGGVGSGLQLNDGKLVFPVQMVRTKNITTVLNTSFIYSTDGITWSLPSGYCEGFGSENNIIEFNASLVNNIRNSGLRRSFETKDFGKTWTEFPPMDKKVDNRNHGVQGSTITIPSGNKLVAAHSSAQNKNNDYTRSDISLYAHNLYSGEVKLIDDFYPKVGNASGAGYSCLSYRKNVDKETLYVVYEANGSIEFQDLSRHLPVIKSYN.

Residue arginine 37 coordinates substrate. A disulfide bridge links cysteine 42 with cysteine 103. The active-site Proton acceptor is the aspartate 62. BNR repeat units lie at residues 71-82 (ARSTDGGKTWNK), 145-156 (YKSTDDGVTFSK), and 210-220 (IYSTDGITWSL). A substrate-binding site is contributed by arginine 246. The stretch at 254 to 265 (FETKDFGKTWTE) is one BNR 4 repeat. Position 309 (arginine 309) interacts with substrate. The active-site Nucleophile is the tyrosine 342. Glutamate 361 is an active-site residue.

The protein belongs to the glycosyl hydrolase 33 family. In terms of assembly, monomer.

It catalyses the reaction Hydrolysis of alpha-(2-&gt;3)-, alpha-(2-&gt;6)-, alpha-(2-&gt;8)- glycosidic linkages of terminal sialic acid residues in oligosaccharides, glycoproteins, glycolipids, colominic acid and synthetic substrates.. Cleaves the terminal sialic acid (N-acetyl neuraminic acid) from carbohydrate chains in glycoproteins providing free sialic acid which can be used as carbon and energy sources. Sialidases have been suggested to be pathogenic factors in microbial infections. In Salmonella typhimurium (strain LT2 / SGSC1412 / ATCC 700720), this protein is Sialidase (nanH).